Consider the following 96-residue polypeptide: Dynein light chain roadblock-type 1 (96 aa).

Position 2 is an N-acetylalanine (Ala2).

It belongs to the GAMAD family. In terms of assembly, homodimer. The cytoplasmic dynein 1 complex consists of two catalytic heavy chains (HCs) and a number of non-catalytic subunits presented by intermediate chains (ICs), light intermediate chains (LICs) and light chains (LCs); the composition seems to vary in respect to the IC, LIC and LC composition. The heavy chain homodimer serves as a scaffold for the probable homodimeric assembly of the respective non-catalytic subunits. The ICs and LICs bind directly to the HC dimer and the LCs assemble on the IC dimer. Interacts with DYNLRB2. Interacts with DYNC1I1 and DYNC1I2. Interacts with RAB6A isoform 1 (GTP-bound); the interaction is direct. Interacts with RAB6A isoform 2 (GDP-bound); the interaction is direct. Interacts with RAB6B (GDP-bound).

It is found in the cytoplasm. Its subcellular location is the cytoskeleton. Acts as one of several non-catalytic accessory components of the cytoplasmic dynein 1 complex that are thought to be involved in linking dynein to cargos and to adapter proteins that regulate dynein function. Cytoplasmic dynein 1 acts as a motor for the intracellular retrograde motility of vesicles and organelles along microtubules. This is Dynein light chain roadblock-type 1 (Dynlrb1) from Mus musculus (Mouse).